Consider the following 65-residue polypeptide: Large ribosomal subunit protein bL35 (65 aa).

The span at 1 to 16 shows a compositional bias: basic residues; it reads MPKMKTKSGAKKRFRV. The disordered stretch occupies residues 1 to 25; it reads MPKMKTKSGAKKRFRVRPGGTVKRG.

It belongs to the bacterial ribosomal protein bL35 family.

The polypeptide is Large ribosomal subunit protein bL35 (Herminiimonas arsenicoxydans).